Here is a 221-residue protein sequence, read N- to C-terminus: Max dimerization protein 1 (221 aa).

The Nuclear localization signal motif lies at 21-49 (RREREAEHGYASMLPYNSKERDGLKRKSK). Disordered stretches follow at residues 28–67 (HGYA…EKNR) and 176–202 (DWSS…DEGY). The 53-residue stretch at 55-107 (NSRSTHNEMEKNRRAHLRLCLEKLKILVPLGPESNRHTTLSLLTRAKSHIKKL) folds into the bHLH domain. The span at 192–202 (SMQSICSDEGY) shows a compositional bias: polar residues.

As to quaternary structure, efficient DNA binding requires dimerization with another bHLH protein. Binds DNA as a heterodimer with MAX.

Its subcellular location is the nucleus. In terms of biological role, transcriptional repressor. MAD binds with MAX to form a sequence-specific DNA-binding protein complex which recognizes the core sequence 5'-CAC[GA]TG-3'. MAD thus antagonizes MYC transcriptional activity by competing for MAX. This is Max dimerization protein 1 (mxd1) from Xenopus tropicalis (Western clawed frog).